We begin with the raw amino-acid sequence, 20 residues long: Unknown protein NF015 from 2D-PAGE (20 aa).

The interval 1 to 20 is disordered; that stretch reads TPQIQKPAPQFSKTALLPDE.

This is Unknown protein NF015 from 2D-PAGE from Naegleria fowleri (Brain eating amoeba).